A 169-amino-acid chain; its full sequence is Protein-export protein SecB (169 aa).

This sequence belongs to the SecB family. As to quaternary structure, homotetramer, a dimer of dimers. One homotetramer interacts with 1 SecA dimer.

The protein resides in the cytoplasm. In terms of biological role, one of the proteins required for the normal export of preproteins out of the cell cytoplasm. It is a molecular chaperone that binds to a subset of precursor proteins, maintaining them in a translocation-competent state. It also specifically binds to its receptor SecA. The polypeptide is Protein-export protein SecB (Alteromonas mediterranea (strain DSM 17117 / CIP 110805 / LMG 28347 / Deep ecotype)).